Reading from the N-terminus, the 103-residue chain is Spherulin-3A (103 aa).

The interval 1–13 is N-terminal arm; the sequence is MSVCKGVSGNPAK. 2 Beta/gamma crystallin 'Greek key' domains span residues 14-55 and 57-99; these read GEVF…KVGP and TKAF…IVAT.

It belongs to the beta/gamma-crystallin family.

It localises to the cytoplasm. Structural protein. The chain is Spherulin-3A from Physarum polycephalum (Slime mold).